Consider the following 519-residue polypeptide: Carboxyl-terminal-processing peptidase 3, chloroplastic (519 aa).

The PDZ domain occupies 186 to 274 (YQSFRIGSDG…IKLKNVNGSG (89 aa)). Residues Ser-407 and Lys-432 each act as charge relay system in the active site.

This sequence belongs to the peptidase S41A family.

The protein resides in the plastid. The protein localises to the chloroplast thylakoid lumen. It catalyses the reaction The enzyme shows specific recognition of a C-terminal tripeptide, Xaa-Yaa-Zaa, in which Xaa is preferably Ala or Leu, Yaa is preferably Ala or Tyr, and Zaa is preferably Ala, but then cleaves at a variable distance from the C-terminus. A typical cleavage is -Ala-Ala-|-Arg-Ala-Ala-Lys-Glu-Asn-Tyr-Ala-Leu-Ala-Ala.. Functionally, protease involved in the C-terminal processing of the chloroplastic D1 protein of photosystem II. This proteolytic processing is necessary to allow the light-driven assembly of the tetranuclear manganese cluster, which is responsible for photosynthetic water oxidation. This is Carboxyl-terminal-processing peptidase 3, chloroplastic (CTPA3) from Arabidopsis thaliana (Mouse-ear cress).